The primary structure comprises 680 residues: Nodulation protein NolNO (680 aa).

This sequence belongs to the NodU/CmcH family.

Its subcellular location is the cytoplasm. Functionally, involved in the O-carbamoylation of nod factors. The protein is Nodulation protein NolNO (nolO) of Sinorhizobium fredii (strain NBRC 101917 / NGR234).